A 536-amino-acid chain; its full sequence is Anthranilate synthase component 1 2 (536 aa).

Residues serine 59 and 299–301 (PYM) each bind L-tryptophan. A chorismate-binding site is contributed by 334–335 (GT). Glutamate 361 contacts Mg(2+). Chorismate-binding positions include tyrosine 449, arginine 469, 487–489 (GAG), and glycine 489. Glutamate 502 lines the Mg(2+) pocket.

Belongs to the anthranilate synthase component I family. As to quaternary structure, tetramer of two components I and two components II. Mg(2+) serves as cofactor.

It catalyses the reaction chorismate + L-glutamine = anthranilate + pyruvate + L-glutamate + H(+). It participates in amino-acid biosynthesis; L-tryptophan biosynthesis; L-tryptophan from chorismate: step 1/5. The protein is Anthranilate synthase component 1 2 (trpE2) of Haloarcula marismortui (strain ATCC 43049 / DSM 3752 / JCM 8966 / VKM B-1809) (Halobacterium marismortui).